The following is a 200-amino-acid chain: Golgi to ER traffic protein 1 (200 aa).

Topologically, residues 1–6 (MEPYTL) are lumenal. A helical membrane pass occupies residues 7 to 26 (LLFIFVIQIVKQIISAVGKQ). The Cytoplasmic portion of the chain corresponds to 27–113 (SIESISWVLY…KVNTFTGYLI (87 aa)). Residues 75-107 (AKWTKLNRQHDKLVAEIEQLQKEVDLDKVKVNT) adopt a coiled-coil conformation. A helical membrane pass occupies residues 114–134 (AILTSIPIWFFRVWYRSVVLF). Over 135-158 (YFPPGILPRALEWSIALPFTVTGG) the chain is Lumenal. Residues 159-175 (VSLTVWMMAAGAVASSL) traverse the membrane as a helical segment. The Cytoplasmic segment spans residues 176-200 (TFLFMFPFEKAVPKPVLAKKSPQQL).

Belongs to the WRB/GET1 family. As to quaternary structure, component of the Golgi to ER traffic (GET) complex, which is composed of GET1, GET2 and GET3. Within the complex, GET1 and GET2 form a heterotetramer which is stabilized by phosphatidylinositol binding and which binds to the GET3 homodimer.

The protein localises to the endoplasmic reticulum membrane. The protein resides in the golgi apparatus membrane. In terms of biological role, required for the post-translational delivery of tail-anchored (TA) proteins to the endoplasmic reticulum. Together with GET2, acts as a membrane receptor for soluble GET3, which recognizes and selectively binds the transmembrane domain of TA proteins in the cytosol. The GET complex cooperates with the HDEL receptor ERD2 to mediate the ATP-dependent retrieval of resident ER proteins that contain a C-terminal H-D-E-L retention signal from the Golgi to the ER. In Meyerozyma guilliermondii (strain ATCC 6260 / CBS 566 / DSM 6381 / JCM 1539 / NBRC 10279 / NRRL Y-324) (Yeast), this protein is Golgi to ER traffic protein 1.